A 126-amino-acid polypeptide reads, in one-letter code: Methylglyoxal synthase (126 aa).

The 126-residue stretch at 1 to 126 folds into the MGS-like domain; it reads MAGSKCLALI…AIKLLPTLEA (126 aa). Substrate is bound by residues His-12, Lys-16, 38 to 41, and 59 to 60; these read TGTT and SG. Asp-65 (proton donor/acceptor) is an active-site residue. A substrate-binding site is contributed by His-92.

It belongs to the methylglyoxal synthase family.

The catalysed reaction is dihydroxyacetone phosphate = methylglyoxal + phosphate. Catalyzes the formation of methylglyoxal from dihydroxyacetone phosphate. In Rhizobium etli (strain ATCC 51251 / DSM 11541 / JCM 21823 / NBRC 15573 / CFN 42), this protein is Methylglyoxal synthase.